A 1597-amino-acid polypeptide reads, in one-letter code: Mitogen-activated protein kinase kinase kinase 4 (1597 aa).

Disordered stretches follow at residues 1–128 (MRDA…VETV) and 424–465 (SPRP…PRVP). A compositionally biased stretch (acidic residues) spans 59 to 69 (SDPEDFSDETN). S77 is subject to Phosphoserine. Residues 84–94 (QMKRLSAKHQR) are compositionally biased toward basic residues. S424 is subject to Phosphoserine. T440 is modified (phosphothreonine). S449 carries the phosphoserine modification. The span at 449-458 (SGTEESDEEP) shows a compositional bias: acidic residues. A Phosphothreonine modification is found at T451. Residues S454 and S492 each carry the phosphoserine modification. 3 disordered regions span residues 1137–1157 (RPVK…IIPT), 1190–1220 (AAGR…SVPE), and 1233–1263 (FRSL…TRRS). Residues 1210–1219 (APDTRGSSVP) show a composition bias toward polar residues. S1241 and S1263 each carry phosphoserine. Positions 1241–1250 (SPTEERDEPA) are enriched in basic and acidic residues. The region spanning 1332–1590 (WQRGNKIGEG…ASQLLDHAFV (259 aa)) is the Protein kinase domain. ATP-binding positions include 1338 to 1346 (IGEGQYGKV) and K1361. Catalysis depends on D1452, which acts as the Proton acceptor.

The protein belongs to the protein kinase superfamily. STE Ser/Thr protein kinase family. MAP kinase kinase kinase subfamily. Monomer and homodimer. Homodimerization enhances kinase activity. Interacts with CDC42. Interacts with TRAF4; this promotes homodimerization. Binds both upstream activators and downstream substrates in multimolecular complexes. Interacts with AXIN1 and DIXDC1; interaction with DIXDC1 prevents interaction with AXIN1. Interacts with GADD45 and MAP2K6. Interacts with ZFP36; this interaction enhances the association with SH3KBP1/CIN85. Interacts with SH3KBP1; this interaction enhances the association with ZFP36. Requires Mg(2+) as cofactor. In terms of tissue distribution, widely expressed. High expression was found in skeletal muscle, kidney, testis followed by heart brain and lung. Low expression was found in spleen.

Its subcellular location is the cytoplasm. It localises to the perinuclear region. It carries out the reaction L-seryl-[protein] + ATP = O-phospho-L-seryl-[protein] + ADP + H(+). It catalyses the reaction L-threonyl-[protein] + ATP = O-phospho-L-threonyl-[protein] + ADP + H(+). With respect to regulation, N-terminal autoinhibitory domain interacts with the C-terminal kinase domain, inhibiting kinase activity, and preventing interaction with its substrate, MAP2K6. The GADD45 proteins activate the kinase by binding to the N-terminal domain. Activated by phosphorylation on Thr-1494. Component of a protein kinase signal transduction cascade. Activates the CSBP2, P38 and JNK MAPK pathways, but not the ERK pathway. Specifically phosphorylates and activates MAP2K4 and MAP2K6. In Mus musculus (Mouse), this protein is Mitogen-activated protein kinase kinase kinase 4 (Map3k4).